The chain runs to 489 residues: Glycogen synthase (489 aa).

ADP-alpha-D-glucose is bound at residue Lys18.

It belongs to the glycosyltransferase 1 family. Bacterial/plant glycogen synthase subfamily.

The catalysed reaction is [(1-&gt;4)-alpha-D-glucosyl](n) + ADP-alpha-D-glucose = [(1-&gt;4)-alpha-D-glucosyl](n+1) + ADP + H(+). It participates in glycan biosynthesis; glycogen biosynthesis. Functionally, synthesizes alpha-1,4-glucan chains using ADP-glucose. The sequence is that of Glycogen synthase from Rhodopseudomonas palustris (strain BisA53).